We begin with the raw amino-acid sequence, 390 residues long: Mannitol-1-phosphate 5-dehydrogenase (390 aa).

An NAD(+)-binding site is contributed by 3-14 (ALHFGAGNIGRG).

It belongs to the mannitol dehydrogenase family.

The catalysed reaction is D-mannitol 1-phosphate + NAD(+) = beta-D-fructose 6-phosphate + NADH + H(+). In Buchnera aphidicola subsp. Baizongia pistaciae (strain Bp), this protein is Mannitol-1-phosphate 5-dehydrogenase.